We begin with the raw amino-acid sequence, 123 residues long: Chondroitin proteoglycan 8 (123 aa).

The N-terminal stretch at 1-16 (MRPFILLALLFSVAIA) is a signal peptide. A disordered region spans residues 32-123 (SVRRSTRGAD…SGSGDEAPAE (92 aa)). The segment covering 38–60 (RGADKKADSSDSSDSNEKDDKVT) has biased composition (basic and acidic residues). Residues S63 and S65 are each glycosylated (O-linked (Xyl...) (chondroitin sulfate) serine). Positions 74-84 (EQLRRVARDVE) are enriched in basic and acidic residues. O-linked (Xyl...) (chondroitin sulfate) serine glycans are attached at residues S87, S93, and S114.

The polypeptide is Chondroitin proteoglycan 8 (cpg-8) (Caenorhabditis briggsae).